Here is a 339-residue protein sequence, read N- to C-terminus: Meiotic recombination protein rec7 (339 aa).

In terms of biological role, may be involved primarily in the early steps of meiotic recombination. The polypeptide is Meiotic recombination protein rec7 (rec7) (Schizosaccharomyces pombe (strain 972 / ATCC 24843) (Fission yeast)).